We begin with the raw amino-acid sequence, 261 residues long: MSGLDDGLENPVLIQEYSRQGRATAAPAPLVLFHDGGGTLFSYFFLESLGRDVFGFADPRATSGQQWKDGITEMAIHYYKRMKMEIRPGSVILGGWSFGGLLALQLAQMIASDSAGGFEVVGVVLIDTSCPEKASYSSTVANGPIVPFRDDVPDCMQEIVRTSMVRNTEMLSQWEAPTWPQGYSKPPILLLRAAEGIDAKEERSLKLGWELCQHDVIDSVEMVPGNHYSLFESDNIGTLSSRLRESCKRMETPYRKAASSD.

This sequence belongs to the AMT4 thioesterase family.

It participates in mycotoxin biosynthesis. Its function is as follows. Thioesterase; part of the gene clusters that mediate the biosynthesis of AM-toxins, host-selective toxins (HSTs) causing Alternaria blotch on apple, a worldwide distributed disease. AM-toxins are cyclic depsipeptides containing the 3 residues 2-hydroxy-isovaleric acid (2-HIV), dehydroalanine, L-alanine which are common for all 3 AM-toxins I to III. The fourth precursor is L-alpha-amino-methoxyphenyl-valeric acid (L-Amv) for AM-toxin I, L-alpha-amino-phenyl-valeric acid (L-Apv) for AM-toxin II, and L-alpha-amino-hydroxyphenyl-valeric acid (L-Ahv) for AM-toxin III. AM-toxins have two target sites for affecting susceptible apple cells; they cause invagination of the plasma membrane and electrolyte loss and chloroplast disorganization. The non-ribosomal peptide synthetase AMT1 contains 4 catalytic modules and is responsible for activation of each residue in AM-toxin. The aldo-keto reductase AMT2 catalyzes the conversion of 2-keto-isovaleric acid (2-KIV) to 2-hydroxy-isovaleric acid (2-HIV), one of the precursor residues incorporated by AMT1 during AM-toxin biosynthesis, by reduction of its ketone to an alcohol. The cytochrome P450 monooxygenase AMT3 and the thioesterase AMT4 are also important for AM-toxin production, but their exact function within the AM-toxin biosynthesis are not known yet. Up to 21 proteins (including AMT1 to AMT4) are predicted to be involved in AM-toxin biosynthesis since their expression ishighly up-regulated in AM-toxin-producing cultures. This chain is Thioesterase AMT4, found in Alternaria alternata (Alternaria rot fungus).